Consider the following 258-residue polypeptide: E3 ubiquitin-protein ligase RNF170 (258 aa).

Residues 1–24 (MAKYQGEVQSLKLDDDSVIEGVSD) are Lumenal-facing. The chain crosses the membrane as a helical span at residues 25-45 (QVLVAVVVSFALIATLVYALF). The Cytoplasmic segment spans residues 46-201 (RNVHQNIHPE…GGLFWMFRIR (156 aa)). The RING-type zinc-finger motif lies at 87 to 130 (CPICLHQASFPVETNCGHLFCGACIIAYWRYGSWLGAISCPICR). A helical transmembrane segment spans residues 202–222 (IILCLMGAFFYLISPLDFVPE). A223 is a topological domain (lumenal). A helical transmembrane segment spans residues 224–244 (LFGILGFLDDFFVIFLLLIYI). At 245-258 (SIMYREVITQRLTR) the chain is on the cytoplasmic side.

In terms of assembly, (Microbial infection) Interacts with human cytomegalovirus protein NEC2/UL50; this interaction promotes of UBA7 ubiquitination and subsequent proteasomal degradation. As to quaternary structure, constitutively associated with the ERLIN1/ERLIN 2 complex. Interacts with activated ITPR1. As to expression, expressed in the spinal cord.

Its subcellular location is the endoplasmic reticulum membrane. It carries out the reaction S-ubiquitinyl-[E2 ubiquitin-conjugating enzyme]-L-cysteine + [acceptor protein]-L-lysine = [E2 ubiquitin-conjugating enzyme]-L-cysteine + N(6)-ubiquitinyl-[acceptor protein]-L-lysine.. Its pathway is protein modification; protein ubiquitination. Its function is as follows. E3 ubiquitin-protein ligase that plays an essential role in stimulus-induced inositol 1,4,5-trisphosphate receptor type 1 (ITPR1) ubiquitination and degradation via the endoplasmic reticulum-associated degradation (ERAD) pathway. Also involved in ITPR1 turnover in resting cells. Selectively inhibits the TLR3-triggered innate immune response by promoting the 'Lys-48'-linked polyubiquitination and degradation of TLR3. This Homo sapiens (Human) protein is E3 ubiquitin-protein ligase RNF170 (RNF170).